The sequence spans 190 residues: dCTP deaminase, dUMP-forming (190 aa).

Residues 101–106, Asp119, 127–129, Gln148, Tyr162, and Gln174 each bind dCTP; these read KSSLGR and TLE. Glu129 acts as the Proton donor/acceptor in catalysis. A disordered region spans residues 162-184; it reads YGSAKVGSKYQGQRGPTPSRSYQ. The segment covering 171-184 has biased composition (polar residues); the sequence is YQGQRGPTPSRSYQ.

The protein belongs to the dCTP deaminase family. In terms of assembly, homotrimer.

The enzyme catalyses dCTP + 2 H2O = dUMP + NH4(+) + diphosphate. Its pathway is pyrimidine metabolism; dUMP biosynthesis; dUMP from dCTP: step 1/1. Functionally, bifunctional enzyme that catalyzes both the deamination of dCTP to dUTP and the hydrolysis of dUTP to dUMP without releasing the toxic dUTP intermediate. In Mycobacterium sp. (strain JLS), this protein is dCTP deaminase, dUMP-forming.